The following is an 89-amino-acid chain: Inner kinetochore subunit mhf2 (89 aa).

Belongs to the CENP-X/MHF2 family. As to quaternary structure, the MHF histone-fold complex is a heterotetramer of 2 mhf1-mhf2 heterodimers. Component of the inner kinetochore constitutive centromere-associated network (CCAN) (also known as central kinetochore Sim4 complex in fission yeast), which is composed of at least cnl2, cnp3, cnp20, fta1, fta2, fta3, fta4, fta6, fta7, mal2, mhf1, mhf2, mis6, mis15, mis17, sim4 and wip1.

It is found in the nucleus. It localises to the cytoplasm. Functionally, component of a FANCM-MHF complex that promotes gene conversion at blocked replication forks, probably by reversal of the stalled fork. FANCM-MHF promotes non-crossover recombination. The sequence is that of Inner kinetochore subunit mhf2 from Schizosaccharomyces pombe (strain 972 / ATCC 24843) (Fission yeast).